The following is a 217-amino-acid chain: Oxygen-insensitive NAD(P)H nitroreductase (217 aa).

10 to 14 (RHSTK) contributes to the FMN binding site. 6 residues coordinate NAD(+): Lys-14, Thr-41, Thr-67, Asn-71, Lys-74, and Arg-107. Asn-71 contributes to the FMN binding site. FMN-binding positions include 165–166 (EG) and 205–207 (KSR).

It belongs to the nitroreductase family. Homodimer. The cofactor is FMN.

Its function is as follows. Reduction of a variety of nitroaromatic compounds using NADH (and to lesser extent NADPH) as source of reducing equivalents; two electrons are transferred. The sequence is that of Oxygen-insensitive NAD(P)H nitroreductase from Enterobacter cloacae.